The primary structure comprises 347 residues: MKKKTVLYKYPMMAQMSYDQQELLDQLPHLDFSHFHSAFKSGFNASINAMEEKALRNAALYFPAEDVKMLGDMGGLVARMFYKASDERGAVLLDIFVFAFITDDLLEKPELRRHNENYRKLQILILKLVRNESFPEKDYPEWRNLITFSRPIFSKFQNLASPTLFHRFAFQYQEYLQGVDWEASIRSPNPVPDIETCKHVKRHLSGGQVAFVLAEFSREIEVPIAVRAHPGMQKFCSLASDLASYDNDIFSLKKEVRDGVVCNTILFLYLHGITKSLQAAVDRVVHMRKQTEREIISLINDLPQFGRDNAVAQEYISAITRCIGGNFEWCSKSTRYHVASSLPHSKL.

Aspartate 103, asparagine 247, serine 251, and glutamate 255 together coordinate Mg(2+). A D(D/E)XX(D/E) motif motif is present at residues 103–107 (DDLLE). Positions 247-255 (NDIFSLKKE) match the NSE motif motif. The short motif at 329–336 (WCSKSTRY) is the WxxxxxRY motif element.

The protein belongs to the terpene synthase family. It depends on Mg(2+) as a cofactor.

Terpene synthase that may be involved in the production of volatile terpenoids. Does not show detectable terpene products with either farnesyl diphosphate (FPP) or geranyl diphosphate (GPP). P.polycephalum has a unique biology and these volatile terpenoids could function in internal communication of P.polycephalum, to mark the territory that have been explored, or they may be involved in chemotaxis. This Physarum polycephalum (Slime mold) protein is Terpene synthase 2.